Here is a 140-residue protein sequence, read N- to C-terminus: Small ribosomal subunit protein uS12 (140 aa).

Asp102 bears the 3-methylthioaspartic acid mark.

Belongs to the universal ribosomal protein uS12 family. As to quaternary structure, part of the 30S ribosomal subunit. Contacts proteins S8 and S17. May interact with IF1 in the 30S initiation complex.

Functionally, with S4 and S5 plays an important role in translational accuracy. Its function is as follows. Interacts with and stabilizes bases of the 16S rRNA that are involved in tRNA selection in the A site and with the mRNA backbone. Located at the interface of the 30S and 50S subunits, it traverses the body of the 30S subunit contacting proteins on the other side and probably holding the rRNA structure together. The combined cluster of proteins S8, S12 and S17 appears to hold together the shoulder and platform of the 30S subunit. This chain is Small ribosomal subunit protein uS12, found in Bacillus cereus (strain G9842).